The following is a 55-amino-acid chain: ATP synthase F(0) complex subunit 8 (55 aa).

A helical membrane pass occupies residues 7–24 (NPWFYIMLMSWLTFSLII). The segment at 35–55 (NPPSNKTSTTTRTLPWTWPWT) is disordered. The segment covering 41 to 55 (TSTTTRTLPWTWPWT) has biased composition (low complexity).

This sequence belongs to the ATPase protein 8 family. In terms of assembly, component of the ATP synthase complex composed at least of ATP5F1A/subunit alpha, ATP5F1B/subunit beta, ATP5MC1/subunit c (homooctomer), MT-ATP6/subunit a, MT-ATP8/subunit 8, ATP5ME/subunit e, ATP5MF/subunit f, ATP5MG/subunit g, ATP5MK/subunit k, ATP5MJ/subunit j, ATP5F1C/subunit gamma, ATP5F1D/subunit delta, ATP5F1E/subunit epsilon, ATP5PF/subunit F6, ATP5PB/subunit b, ATP5PD/subunit d, ATP5PO/subunit OSCP. ATP synthase complex consists of a soluble F(1) head domain (subunits alpha(3) and beta(3)) - the catalytic core - and a membrane F(0) domain - the membrane proton channel (subunits c, a, 8, e, f, g, k and j). These two domains are linked by a central stalk (subunits gamma, delta, and epsilon) rotating inside the F1 region and a stationary peripheral stalk (subunits F6, b, d, and OSCP).

It localises to the mitochondrion membrane. Functionally, subunit 8, of the mitochondrial membrane ATP synthase complex (F(1)F(0) ATP synthase or Complex V) that produces ATP from ADP in the presence of a proton gradient across the membrane which is generated by electron transport complexes of the respiratory chain. ATP synthase complex consist of a soluble F(1) head domain - the catalytic core - and a membrane F(1) domain - the membrane proton channel. These two domains are linked by a central stalk rotating inside the F(1) region and a stationary peripheral stalk. During catalysis, ATP synthesis in the catalytic domain of F(1) is coupled via a rotary mechanism of the central stalk subunits to proton translocation. In vivo, can only synthesize ATP although its ATP hydrolase activity can be activated artificially in vitro. Part of the complex F(0) domain. This Corythaixoides concolor (Grey go-away-bird) protein is ATP synthase F(0) complex subunit 8.